The following is a 368-amino-acid chain: tRNA/tmRNA (uracil-C(5))-methyltransferase (368 aa).

5 residues coordinate S-adenosyl-L-methionine: Gln-190, Tyr-218, Asn-223, Glu-239, and Asp-301. Cys-326 serves as the catalytic Nucleophile. The Proton acceptor role is filled by Glu-360.

Belongs to the class I-like SAM-binding methyltransferase superfamily. RNA M5U methyltransferase family. TrmA subfamily.

It catalyses the reaction uridine(54) in tRNA + S-adenosyl-L-methionine = 5-methyluridine(54) in tRNA + S-adenosyl-L-homocysteine + H(+). The catalysed reaction is uridine(341) in tmRNA + S-adenosyl-L-methionine = 5-methyluridine(341) in tmRNA + S-adenosyl-L-homocysteine + H(+). Functionally, dual-specificity methyltransferase that catalyzes the formation of 5-methyluridine at position 54 (m5U54) in all tRNAs, and that of position 341 (m5U341) in tmRNA (transfer-mRNA). The polypeptide is tRNA/tmRNA (uracil-C(5))-methyltransferase (Photobacterium profundum (strain SS9)).